Consider the following 480-residue polypeptide: Aspartyl/glutamyl-tRNA(Asn/Gln) amidotransferase subunit B (480 aa).

Belongs to the GatB/GatE family. GatB subfamily. As to quaternary structure, heterotrimer of A, B and C subunits.

The catalysed reaction is L-glutamyl-tRNA(Gln) + L-glutamine + ATP + H2O = L-glutaminyl-tRNA(Gln) + L-glutamate + ADP + phosphate + H(+). It catalyses the reaction L-aspartyl-tRNA(Asn) + L-glutamine + ATP + H2O = L-asparaginyl-tRNA(Asn) + L-glutamate + ADP + phosphate + 2 H(+). Its function is as follows. Allows the formation of correctly charged Asn-tRNA(Asn) or Gln-tRNA(Gln) through the transamidation of misacylated Asp-tRNA(Asn) or Glu-tRNA(Gln) in organisms which lack either or both of asparaginyl-tRNA or glutaminyl-tRNA synthetases. The reaction takes place in the presence of glutamine and ATP through an activated phospho-Asp-tRNA(Asn) or phospho-Glu-tRNA(Gln). In Caldicellulosiruptor bescii (strain ATCC BAA-1888 / DSM 6725 / KCTC 15123 / Z-1320) (Anaerocellum thermophilum), this protein is Aspartyl/glutamyl-tRNA(Asn/Gln) amidotransferase subunit B.